We begin with the raw amino-acid sequence, 426 residues long: Histidine--tRNA ligase (426 aa).

The protein belongs to the class-II aminoacyl-tRNA synthetase family. As to quaternary structure, homodimer.

It localises to the cytoplasm. It catalyses the reaction tRNA(His) + L-histidine + ATP = L-histidyl-tRNA(His) + AMP + diphosphate + H(+). The protein is Histidine--tRNA ligase of Pseudoalteromonas translucida (strain TAC 125).